A 540-amino-acid polypeptide reads, in one-letter code: MHEIITLQLGQQSNYLATHFWNAQESYFTYSEDQEPAVNHDIHWRPGIGADGTETYMPRTVIYDLKGGFGSMAKTNALYNDLEEGQTPQALWNGPTVLQKQPAIPQSAYQQSLDAGLEPPPLTTDTVRYWSDFNRVFYHPRSVVQLNEYELNSSIMPFERYATGEDLFASLDKEHDLLDRDLRPFIEEADQMQGIQVMTGLDDAWGGFAAKYLERIRDEYGKTAMFVWGSEQESVMRAGGLSREKRLLRLANKARTMTEVYKYASVVVPFTVPATLPGSVVLDAGSQWHNTALSAAAIESVTLPSRLRDPANRDTMATLADSLNAMGKQNVASLGMSFAPEPTEEEDVVMEGTQDFRQRQLLNQKSSRHAAVMVKENPEGVFLDINFTPTDQLDYVRRRGGGDDDRPRVFSQMLTSRGYEIDEQVQEAKEAEEDERFRRRSSYETVMKSYHTPLRFPLLDSFPQIFRDDSGEPLKRGGAINVTSSLSTDASVHKRLKSLRTTVGRSIGLEDREQLGNELAEMADEYHEGWSSGSDDGDDD.

The tract at residues 517–540 (NELAEMADEYHEGWSSGSDDGDDD) is disordered.

This sequence belongs to the misato family.

The protein localises to the mitochondrion. Functionally, involved in the partitioning of the mitochondrial organelle and mitochondrial DNA (mtDNA) inheritance. The sequence is that of Protein dml-1 (dml-1) from Neurospora crassa (strain ATCC 24698 / 74-OR23-1A / CBS 708.71 / DSM 1257 / FGSC 987).